We begin with the raw amino-acid sequence, 123 residues long: Large ribosomal subunit protein bL12 (123 aa).

It belongs to the bacterial ribosomal protein bL12 family. Homodimer. Part of the ribosomal stalk of the 50S ribosomal subunit. Forms a multimeric L10(L12)X complex, where L10 forms an elongated spine to which 2 to 4 L12 dimers bind in a sequential fashion. Binds GTP-bound translation factors.

In terms of biological role, forms part of the ribosomal stalk which helps the ribosome interact with GTP-bound translation factors. Is thus essential for accurate translation. This is Large ribosomal subunit protein bL12 from Finegoldia magna (strain ATCC 29328 / DSM 20472 / WAL 2508) (Peptostreptococcus magnus).